We begin with the raw amino-acid sequence, 307 residues long: Protein rep (307 aa).

Tyrosine 219 contributes to the DNA binding site.

The protein belongs to the Gram-positive plasmids replication protein type 1 family.

In Bacillus sp, this protein is Protein rep (repA).